The primary structure comprises 197 residues: Isopentenyl-diphosphate Delta-isomerase (197 aa).

Mn(2+) is bound by residues His41 and His48. The 138-residue stretch at 46-183 (QLHRAFSVFL…AWFMTVLDAA (138 aa)) folds into the Nudix hydrolase domain. Residue Cys83 is part of the active site. His85 contributes to the Mn(2+) binding site. Glu103 contributes to the Mg(2+) binding site. Mn(2+) contacts are provided by Glu130 and Glu132. Glu132 is an active-site residue.

Belongs to the IPP isomerase type 1 family. It depends on Mg(2+) as a cofactor. Mn(2+) is required as a cofactor.

Its subcellular location is the cytoplasm. The enzyme catalyses isopentenyl diphosphate = dimethylallyl diphosphate. It functions in the pathway isoprenoid biosynthesis; dimethylallyl diphosphate biosynthesis; dimethylallyl diphosphate from isopentenyl diphosphate: step 1/1. Its function is as follows. Catalyzes the 1,3-allylic rearrangement of the homoallylic substrate isopentenyl (IPP) to its highly electrophilic allylic isomer, dimethylallyl diphosphate (DMAPP). The polypeptide is Isopentenyl-diphosphate Delta-isomerase (Streptomyces griseus subsp. griseus (strain JCM 4626 / CBS 651.72 / NBRC 13350 / KCC S-0626 / ISP 5235)).